A 103-amino-acid polypeptide reads, in one-letter code: Co-chaperonin GroES (103 aa).

The protein belongs to the GroES chaperonin family. In terms of assembly, heptamer of 7 subunits arranged in a ring. Interacts with the chaperonin GroEL.

Its subcellular location is the cytoplasm. In terms of biological role, together with the chaperonin GroEL, plays an essential role in assisting protein folding. The GroEL-GroES system forms a nano-cage that allows encapsulation of the non-native substrate proteins and provides a physical environment optimized to promote and accelerate protein folding. GroES binds to the apical surface of the GroEL ring, thereby capping the opening of the GroEL channel. In Prochlorococcus marinus (strain MIT 9215), this protein is Co-chaperonin GroES.